We begin with the raw amino-acid sequence, 556 residues long: ATP synthase subunit beta-1, mitochondrial (556 aa).

A compositionally biased stretch (low complexity) spans 1 to 20 (MASRRVLSSLLRSSSGRSAA). Positions 1 to 37 (MASRRVLSSLLRSSSGRSAAKLGNRNPRLPSPSPARH) are disordered. The N-terminal 51 residues, 1 to 51 (MASRRVLSSLLRSSSGRSAAKLGNRNPRLPSPSPARHAAPCSYLLGRVAEY), are a transit peptide targeting the mitochondrion. Ser59 is modified (phosphoserine). Residue 231–238 (GGAGVGKT) coordinates ATP.

This sequence belongs to the ATPase alpha/beta chains family. F-type ATPases have 2 components, CF(1) - the catalytic core - and CF(0) - the membrane proton channel. CF(1) has five subunits: alpha(3), beta(3), gamma(1), delta(1), epsilon(1). CF(0) has three main subunits: a, b and c.

It localises to the mitochondrion. It is found in the mitochondrion inner membrane. The catalysed reaction is ATP + H2O + 4 H(+)(in) = ADP + phosphate + 5 H(+)(out). Its function is as follows. Mitochondrial membrane ATP synthase (F(1)F(0) ATP synthase or Complex V) produces ATP from ADP in the presence of a proton gradient across the membrane which is generated by electron transport complexes of the respiratory chain. F-type ATPases consist of two structural domains, F(1) - containing the extramembraneous catalytic core, and F(0) - containing the membrane proton channel, linked together by a central stalk and a peripheral stalk. During catalysis, ATP synthesis in the catalytic domain of F(1) is coupled via a rotary mechanism of the central stalk subunits to proton translocation. Subunits alpha and beta form the catalytic core in F(1). Rotation of the central stalk against the surrounding alpha(3)beta(3) subunits leads to hydrolysis of ATP in three separate catalytic sites on the beta subunits. The chain is ATP synthase subunit beta-1, mitochondrial from Arabidopsis thaliana (Mouse-ear cress).